Consider the following 354-residue polypeptide: Ephrin-4 (354 aa).

A signal peptide spans 1–22 (MKRPLDFLLAICLILLRSSTFA). One can recognise an Ephrin RBD domain in the interval 23 to 173 (DEHTVHWNST…SKNMRLSMKV (151 aa)). Asn-30 carries an N-linked (GlcNAc...) asparagine glycan. Intrachain disulfides connect Cys-55-Cys-92 and Cys-80-Cys-162. The segment at 173-196 (VLSSQPTPSPSSKPARSRTDARRQ) is disordered. Positions 175-186 (SSQPTPSPSSKP) are enriched in low complexity. Ser-335 carries the GPI-anchor amidated serine lipid modification. A propeptide spans 336–354 (SSSLPTFLIVFLIAVNLLF) (removed in mature form).

The protein belongs to the ephrin family. Post-translationally, may undergo proteolysis by metalloprotease sup-17 to give rise to a soluble form.

It localises to the cell membrane. Its function is as follows. Regulates the formation or stabilization of cell-cell contacts at several stages of epithelial morphogenesis. In early embryonic development, involved in ventral closure of the epidermis. During male tail morphogenesis, regulates precursor cell sorting together with mab-20 and allows the formation of distinct sensory rays. Probably acts as a ligand for lad-2 to regulate axon guidance of several neurons including SDQL, SDQR, SMD and PLN neurons during neurogenesis. In Caenorhabditis briggsae, this protein is Ephrin-4 (efn-4).